The chain runs to 432 residues: Tol-Pal system protein TolB (432 aa).

A signal peptide spans 1-21 (MKKVIYTIVGFVFMWSTSVYA).

It belongs to the TolB family. The Tol-Pal system is composed of five core proteins: the inner membrane proteins TolA, TolQ and TolR, the periplasmic protein TolB and the outer membrane protein Pal. They form a network linking the inner and outer membranes and the peptidoglycan layer.

It localises to the periplasm. Part of the Tol-Pal system, which plays a role in outer membrane invagination during cell division and is important for maintaining outer membrane integrity. This Hydrogenovibrio crunogenus (strain DSM 25203 / XCL-2) (Thiomicrospira crunogena) protein is Tol-Pal system protein TolB.